A 260-amino-acid polypeptide reads, in one-letter code: MADS-box transcription factor 29 (260 aa).

The 61-residue stretch at 1–61 folds into the MADS-box domain; that stretch reads MGRGKIEIKR…GKMFEYCSPT (61 aa). In terms of domain architecture, K-box spans 85-175; it reads DQQIFVEMTR…CRMINENHHQ (91 aa).

Expressed in developing seeds.

The protein localises to the nucleus. In terms of biological role, probable transcription factor. The chain is MADS-box transcription factor 29 (MADS29) from Oryza sativa subsp. japonica (Rice).